A 191-amino-acid chain; its full sequence is Transcription factor E (191 aa).

In terms of domain architecture, HTH TFE/IIEalpha-type spans 4-87 (RNKELLEIGR…YWHIETKRLP (84 aa)). A disordered region spans residues 170-191 (APPKKEKKGKKSKKRSKKSKKK). Residues 174–191 (KEKKGKKSKKRSKKSKKK) are compositionally biased toward basic residues.

It belongs to the TFE family. In terms of assembly, monomer. Interaction with RNA polymerase subunits RpoF and RpoE is necessary for Tfe stimulatory transcription activity. Able to interact with Tbp and RNA polymerase in the absence of DNA promoter. Interacts both with the preinitiation and elongation complexes.

Transcription factor that plays a role in the activation of archaeal genes transcribed by RNA polymerase. Facilitates transcription initiation by enhancing TATA-box recognition by TATA-box-binding protein (Tbp), and transcription factor B (Tfb) and RNA polymerase recruitment. Not absolutely required for transcription in vitro, but particularly important in cases where Tbp or Tfb function is not optimal. It dynamically alters the nucleic acid-binding properties of RNA polymerases by stabilizing the initiation complex and destabilizing elongation complexes. Seems to translocate with the RNA polymerase following initiation and acts by binding to the non template strand of the transcription bubble in elongation complexes. This chain is Transcription factor E, found in Pyrococcus horikoshii (strain ATCC 700860 / DSM 12428 / JCM 9974 / NBRC 100139 / OT-3).